A 35-amino-acid chain; its full sequence is Photosystem II reaction center protein T (35 aa).

The helical transmembrane segment at 3-23 (ALVYTFLLVSTLGIIFFAIFF) threads the bilayer.

This sequence belongs to the PsbT family. As to quaternary structure, PSII is composed of 1 copy each of membrane proteins PsbA, PsbB, PsbC, PsbD, PsbE, PsbF, PsbH, PsbI, PsbJ, PsbK, PsbL, PsbM, PsbT, PsbY, PsbZ, Psb30/Ycf12, at least 3 peripheral proteins of the oxygen-evolving complex and a large number of cofactors. It forms dimeric complexes.

Its subcellular location is the plastid. The protein localises to the chloroplast thylakoid membrane. In terms of biological role, found at the monomer-monomer interface of the photosystem II (PS II) dimer, plays a role in assembly and dimerization of PSII. PSII is a light-driven water plastoquinone oxidoreductase, using light energy to abstract electrons from H(2)O, generating a proton gradient subsequently used for ATP formation. The sequence is that of Photosystem II reaction center protein T from Stangeria eriopus (Natal grass cycad).